We begin with the raw amino-acid sequence, 121 residues long: Fluoride-specific ion channel FluC (121 aa).

4 consecutive transmembrane segments (helical) span residues L5–I25, F33–T53, L66–S83, and F98–W118. 2 residues coordinate Na(+): G74 and T77.

The protein belongs to the fluoride channel Fluc/FEX (TC 1.A.43) family.

The protein resides in the cell inner membrane. It carries out the reaction fluoride(in) = fluoride(out). Na(+) is not transported, but it plays an essential structural role and its presence is essential for fluoride channel function. Its function is as follows. Fluoride-specific ion channel. Important for reducing fluoride concentration in the cell, thus reducing its toxicity. The chain is Fluoride-specific ion channel FluC from Phocaeicola vulgatus (strain ATCC 8482 / DSM 1447 / JCM 5826 / CCUG 4940 / NBRC 14291 / NCTC 11154) (Bacteroides vulgatus).